The primary structure comprises 140 residues: Transcription antitermination protein NusB (140 aa).

This sequence belongs to the NusB family.

Involved in transcription antitermination. Required for transcription of ribosomal RNA (rRNA) genes. Binds specifically to the boxA antiterminator sequence of the ribosomal RNA (rrn) operons. The protein is Transcription antitermination protein NusB of Streptococcus pneumoniae (strain JJA).